Reading from the N-terminus, the 926-residue chain is Periplasmic nitrate reductase (926 aa).

A signal peptide (tat-type signal) is located at residues 1–30 (MNRRDFIKSAAASAACASAGIAIPANLSAA). Residues 37 to 93 (WRWDKAACRFCGTGCGIMVATKEGKIVAVKGDPEAPVNRGLNCIKGYFNAKIMYGED) form the 4Fe-4S Mo/W bis-MGD-type domain. 4 residues coordinate [4Fe-4S] cluster: Cys-44, Cys-47, Cys-51, and Cys-79. Residues Lys-81, Gln-149, Asn-174, Cys-178, 211 to 218 (WGANMAEM), Met-419, Gln-423, Asn-529, 554 to 555 (SD), Lys-577, Asp-604, and 816 to 825 (TGRVLEHWHS) each bind Mo-bis(molybdopterin guanine dinucleotide). Residue Trp-892 participates in substrate binding. Mo-bis(molybdopterin guanine dinucleotide)-binding residues include Asn-900 and Lys-917.

The protein belongs to the prokaryotic molybdopterin-containing oxidoreductase family. NasA/NapA/NarB subfamily. Component of the periplasmic nitrate reductase NapAB complex composed of NapA and NapB. It depends on [4Fe-4S] cluster as a cofactor. Mo-bis(molybdopterin guanine dinucleotide) serves as cofactor. In terms of processing, predicted to be exported by the Tat system. The position of the signal peptide cleavage has not been experimentally proven.

It localises to the periplasm. It catalyses the reaction 2 Fe(II)-[cytochrome] + nitrate + 2 H(+) = 2 Fe(III)-[cytochrome] + nitrite + H2O. Catalytic subunit of the periplasmic nitrate reductase complex NapAB. Receives electrons from NapB and catalyzes the reduction of nitrate to nitrite. In Campylobacter curvus (strain 525.92), this protein is Periplasmic nitrate reductase.